The sequence spans 214 residues: ATP-dependent Clp protease proteolytic subunit 2 (214 aa).

Ser110 acts as the Nucleophile in catalysis. His135 is a catalytic residue.

Belongs to the peptidase S14 family. As to quaternary structure, fourteen ClpP subunits assemble into 2 heptameric rings which stack back to back to give a disk-like structure with a central cavity, resembling the structure of eukaryotic proteasomes.

It localises to the cytoplasm. It carries out the reaction Hydrolysis of proteins to small peptides in the presence of ATP and magnesium. alpha-casein is the usual test substrate. In the absence of ATP, only oligopeptides shorter than five residues are hydrolyzed (such as succinyl-Leu-Tyr-|-NHMec, and Leu-Tyr-Leu-|-Tyr-Trp, in which cleavage of the -Tyr-|-Leu- and -Tyr-|-Trp bonds also occurs).. Its function is as follows. Cleaves peptides in various proteins in a process that requires ATP hydrolysis. Has a chymotrypsin-like activity. Plays a major role in the degradation of misfolded proteins. The sequence is that of ATP-dependent Clp protease proteolytic subunit 2 from Mycobacterium bovis (strain ATCC BAA-935 / AF2122/97).